A 138-amino-acid chain; its full sequence is PilB-specific inhibitory protein CpiA (138 aa).

In terms of assembly, interacts with PilB but not with TfpB.

In terms of biological role, acts as a PilB inhibitor to control natural transformation. Inhibits type IV pili (T4P) extension by specifically binding and inhibiting the pilus extension ATPase PilB but not TfpB. This activity probably modulates T4P extension under different environmental conditions. This chain is PilB-specific inhibitory protein CpiA, found in Acinetobacter baylyi (strain ATCC 33305 / BD413 / ADP1).